The chain runs to 879 residues: MTQEYSTLRNNISMLGRFLGETINDAQGEDILELIENIRKLSRNSRAGDDKARQALLDTLGSISNENIIPVARAFSQFLNLTNIAEQYQTISREHSLAQSSSQSLSELFKRLKEQNASVEEVHKTVEKLLIELVLTAHPTETTRRSLIHKHIEINKCLSKLEHHDLTEKERNIIERLLLRLIAEAWHTNEIRTVRPTPFDEAKWGFAMLENSLWQAVPEFLRQLNETAREFLGYDLPVGLKPVRISSWMGGDRDGNPFVTAQITKKVLYFARWKAADLFLQDISKLADELSMMKCSDEFRDKYGEHLEPYRFVVKNLRNQLTATLAYFDDHLSNRTPRVSESEIILEDNQLWEPLYDCYQSLIQYGMRIIANGSLLNILHRISCFGVTLSQMDIRQESTRHTDAIAEITRYIGLGDYAQWTEDDKQAFLIRELSSRRPLIPQNWTPSPETQEILDTCKVIAQQKQGVIACYVISMARNASDVLAVHLLLKEAGVPYHIPVVPLFETLEDLDAAEKVMTQLFNVGWYRGVINNRQMVMIGYSDSAKDAGMMAASWAQYRAQEALVNLTEKLGIELTLFHGRGGTIGRGGAPAHAALLSQPPRSLKNGLRVTEQGEMIRFKLGLPTVAVETFDLYASAILEANLLPPPEPKPEWRNIMDELSTISCDIYRGVVRGDKDFVPYFRSATPEQELSKLPLGSRPAKRNPNGGVESLRAIPWIFAWMQNRLMLPAWLGAGASIRQIIEQGKGDIIHKMCENWPFFSTRIGMLEMVFSKSDTWLSQQYDQRLVKKELWYLGENLRKQLEDDIQTVLSLSHQSELMSDLPWIADSIALRNIYTDPLNLLQVELLHRFRENPEQVNPDVEQALMITITGIAAGMRNTG.

Active-site residues include His138 and Lys545.

The protein belongs to the PEPCase type 1 family. Requires Mg(2+) as cofactor.

It catalyses the reaction oxaloacetate + phosphate = phosphoenolpyruvate + hydrogencarbonate. Forms oxaloacetate, a four-carbon dicarboxylic acid source for the tricarboxylic acid cycle. This is Phosphoenolpyruvate carboxylase from Haemophilus influenzae (strain PittEE).